A 151-amino-acid chain; its full sequence is Pyruvoyl-dependent arginine decarboxylase (151 aa).

The residue at position 42 (Ser42) is a Pyruvic acid (Ser).

Belongs to the PdaD family. The cofactor is pyruvate.

It carries out the reaction L-arginine + H(+) = agmatine + CO2. The sequence is that of Pyruvoyl-dependent arginine decarboxylase from Methanothermobacter thermautotrophicus (strain ATCC 29096 / DSM 1053 / JCM 10044 / NBRC 100330 / Delta H) (Methanobacterium thermoautotrophicum).